Consider the following 260-residue polypeptide: Pectate lyase H (260 aa).

The N-terminal stretch at 1–17 (MFIKNGLLLSLATSVLA) is a signal peptide.

This sequence belongs to the polysaccharide lyase 3 family. Ca(2+) is required as a cofactor.

It is found in the secreted. The enzyme catalyses Eliminative cleavage of (1-&gt;4)-alpha-D-galacturonan to give oligosaccharides with 4-deoxy-alpha-D-galact-4-enuronosyl groups at their non-reducing ends.. Pectinolytic enzyme consist of four classes of enzymes: pectin lyase, polygalacturonase, pectin methylesterase and rhamnogalacturonase. Among pectinolytic enzymes, pectin lyase is the most important in depolymerization of pectin, since it cleaves internal glycosidic bonds of highly methylated pectins. Favors pectate, the anion, over pectin, the methyl ester. The polypeptide is Pectate lyase H (plyH) (Emericella nidulans (strain FGSC A4 / ATCC 38163 / CBS 112.46 / NRRL 194 / M139) (Aspergillus nidulans)).